A 612-amino-acid polypeptide reads, in one-letter code: uncharacterized protein (612 aa).

Helical transmembrane passes span 13-33, 38-58, 67-87, 107-127, 144-164, and 189-209; these read IPLT…EWLP, AILV…EGIA, TIMA…IQII, GFIV…AIFL, LLIP…LGTS, and LGLL…PILL. RCK C-terminal domains lie at 218–302 and 316–403; these read GNVA…ERGI and NNAG…LLVL. The next 6 helical transmembrane spans lie at 419–439, 459–479, 501–521, 525–545, 546–566, and 586–606; these read AIAI…PISV, IYGA…PLGT, LSGY…TEIL, ATVV…GLNP, LAFM…PIGY, and IGAP…MLIY.

The protein belongs to the SLC13A/DASS transporter (TC 2.A.47) family. NADC subfamily.

It is found in the cell membrane. This is an uncharacterized protein from Synechocystis sp. (strain ATCC 27184 / PCC 6803 / Kazusa).